Consider the following 135-residue polypeptide: Small ribosomal subunit protein eS6 (135 aa).

It belongs to the eukaryotic ribosomal protein eS6 family.

This chain is Small ribosomal subunit protein eS6, found in Methanococcoides burtonii (strain DSM 6242 / NBRC 107633 / OCM 468 / ACE-M).